Reading from the N-terminus, the 401-residue chain is Nodulation protein E (401 aa).

The Ketosynthase family 3 (KS3) domain occupies 2–400 (DRRVVITGIG…GTNAVLAFRQ (399 aa)). Residues Cys-162, His-294, and His-331 each act as for beta-ketoacyl synthase activity in the active site. A helical membrane pass occupies residues 329–348 (HAHCLGAASALEMIACVMAI).

It belongs to the thiolase-like superfamily. Beta-ketoacyl-ACP synthases family.

The protein localises to the cell inner membrane. Functionally, proposed to synthesize NOD factor fatty acyl chain. Involved in the synthesis of a highly unsaturated fatty acid moiety, which forms part of a lipo-oligosaccharide that is responsible for host specificity. The polypeptide is Nodulation protein E (nodE) (Rhizobium leguminosarum bv. trifolii).